The sequence spans 197 residues: dITP/XTP pyrophosphatase (197 aa).

Substrate is bound at residue 8–13; that stretch reads TGNVGK. Mg(2+) is bound by residues Glu-40 and Asp-69. Asp-69 acts as the Proton acceptor in catalysis. Residues Ser-70, 154-157, Lys-177, and 182-183 contribute to the substrate site; these read FGYD and HR.

This sequence belongs to the HAM1 NTPase family. As to quaternary structure, homodimer. It depends on Mg(2+) as a cofactor. Mn(2+) is required as a cofactor. Ni(2+) serves as cofactor.

It catalyses the reaction XTP + H2O = XMP + diphosphate + H(+). The catalysed reaction is dITP + H2O = dIMP + diphosphate + H(+). The enzyme catalyses ITP + H2O = IMP + diphosphate + H(+). Pyrophosphatase that catalyzes the hydrolysis of nucleoside triphosphates to their monophosphate derivatives, with a high preference for the non-canonical purine nucleotides XTP (xanthosine triphosphate), dITP (deoxyinosine triphosphate) and ITP. Can also efficiently hydrolyze 2'-deoxy-N-6-hydroxylaminopurine triphosphate (dHAPTP). Seems to function as a house-cleaning enzyme that removes non-canonical purine nucleotides from the nucleotide pool, thus preventing their incorporation into DNA/RNA and avoiding chromosomal lesions. To a much lesser extent, is also able to hydrolyze GTP, dGTP and dUTP, but shows very low activity toward the canonical nucleotides dATP, dCTP and dTTP and toward 8-oxo-dGTP, purine deoxyribose triphosphate, 2-aminopurine deoxyribose triphosphate and 2,6-diaminopurine deoxyribose triphosphate. In terms of biological role, genetic interactions among priB, dam, lexA, nagC, polA, rdgB, rdgB, rep and uup link the PriA-PriB replication restart pathway to DNA double-strand break repair. This is dITP/XTP pyrophosphatase from Escherichia coli (strain K12).